Consider the following 99-residue polypeptide: Small ribosomal subunit protein uS17 (99 aa).

It belongs to the universal ribosomal protein uS17 family. Part of the 30S ribosomal subunit.

Functionally, one of the primary rRNA binding proteins, it binds specifically to the 5'-end of 16S ribosomal RNA. This chain is Small ribosomal subunit protein uS17, found in Thermosipho africanus (strain TCF52B).